Reading from the N-terminus, the 103-residue chain is Large ribosomal subunit protein uL24 (103 aa).

This sequence belongs to the universal ribosomal protein uL24 family. Part of the 50S ribosomal subunit.

Functionally, one of two assembly initiator proteins, it binds directly to the 5'-end of the 23S rRNA, where it nucleates assembly of the 50S subunit. Its function is as follows. One of the proteins that surrounds the polypeptide exit tunnel on the outside of the subunit. The sequence is that of Large ribosomal subunit protein uL24 from Exiguobacterium sibiricum (strain DSM 17290 / CCUG 55495 / CIP 109462 / JCM 13490 / 255-15).